The chain runs to 679 residues: Oxidant-induced cell-cycle arrest protein 5 (679 aa).

A Rab-GAP TBC domain is found at Gly-50–Arg-441. A compositionally biased stretch (low complexity) spans Asn-135–Pro-153. 3 disordered regions span residues Asn-135–Ala-159, Thr-250–Asn-271, and Gln-524–Ser-544. Positions Gln-524 to Asp-539 are enriched in polar residues.

Belongs to the OCA5 family.

The protein resides in the cytoplasm. Its function is as follows. Required for replication of brome mosaic virus (BMV), a positive-strand RNA virus. This Saccharomyces cerevisiae (strain RM11-1a) (Baker's yeast) protein is Oxidant-induced cell-cycle arrest protein 5 (OCA5).